The primary structure comprises 386 residues: Myosin light chain kinase family member 4 (386 aa).

Serine 100 is subject to Phosphoserine. The Protein kinase domain occupies 107-361; the sequence is VSKSEILGGG…ASEALKHPWL (255 aa). ATP is bound by residues 113-121 and lysine 136; that span reads LGGGRFGQV. The Proton acceptor role is filled by aspartate 227.

Belongs to the protein kinase superfamily. CAMK Ser/Thr protein kinase family.

The enzyme catalyses L-seryl-[protein] + ATP = O-phospho-L-seryl-[protein] + ADP + H(+). It catalyses the reaction L-threonyl-[protein] + ATP = O-phospho-L-threonyl-[protein] + ADP + H(+). This chain is Myosin light chain kinase family member 4 (Mylk4), found in Mus musculus (Mouse).